The primary structure comprises 100 residues: Small ribosomal subunit protein uS14c (100 aa).

This sequence belongs to the universal ribosomal protein uS14 family. Part of the 30S ribosomal subunit.

The protein localises to the plastid. The protein resides in the chloroplast. Its function is as follows. Binds 16S rRNA, required for the assembly of 30S particles. The chain is Small ribosomal subunit protein uS14c from Illicium oligandrum (Star anise).